Reading from the N-terminus, the 223-residue chain is All-trans retinoic acid-induced differentiation factor (223 aa).

The N-terminal stretch at 1 to 25 (MASRESGGSRAAALLLVLGVERALA) is a signal peptide. Topologically, residues 26–193 (LPEICTLCPG…YKCMRQGSFS (168 aa)) are extracellular. Residues 146–187 (QRDLCNSTGSPEMCPENGSCASDGPGLLQCVCADGFHGYKCM) enclose the EGF-like domain. 3 disulfides stabilise this stretch: cysteine 150-cysteine 165, cysteine 159-cysteine 175, and cysteine 177-cysteine 186. Residues 194–214 (LLMFFGILGSTTLAISILLWG) traverse the membrane as a helical segment. The Cytoplasmic portion of the chain corresponds to 215-223 (TQRRKAKAS).

In terms of assembly, interacts with NELL1; the interaction promotes osteoblastic differentiation and mineralization. Interacts with SLC37A3; the interaction is direct and both proteins are mutually dependent for their stability.

It is found in the nucleus envelope. It localises to the cell membrane. Its subcellular location is the lysosome membrane. Functionally, promotes osteoblast cell differentiation and terminal mineralization. Plays a role in inducing the cell cycle arrest via inhibiting CCND1 expression in all-trans-retinoic acid (ATRA) signal pathway. In osteoclasts, forms a transporter complex with ATRAID for nitrogen-containing-bisphophonates (N-BPs) required for releasing N-BP molecules that have trafficked to lysosomes through fluid-phase endocytosis into the cytosol. This chain is All-trans retinoic acid-induced differentiation factor (Atraid), found in Mus musculus (Mouse).